The primary structure comprises 228 residues: E3 ubiquitin-protein ligase RNF114 (228 aa).

The segment at 29–68 (CPVCLEVYEKPVQVPCGHVFCSACLQECLKPKKPVCGVCR) adopts an RING-type zinc-finger fold. Zn(2+) is bound by residues Cys-91 and Cys-94. A C2HC RNF-type zinc finger spans residues 91–110 (CHGCRKNFFLSKIRSHVATC). Lys-102 is subject to N6-acetyllysine. Residues His-106 and Cys-110 each contribute to the Zn(2+) site. Lys-112 is modified (N6-acetyllysine).

Interacts with XAF1, the interaction increases XAF1 stability and proapoptotic effects, and may regulate IFN signaling. Autoubiquitinated. Polyubiquitinated in the presence of E2 enzymes UBE2D1, UBE2D2 and UBE2D3, but only monoubiquitinated in the presence of UBE2E1. In terms of tissue distribution, expressed in numerous tissues, including skin, CD4 lymphocytes and dendritic cells. Highest levels in testis.

The protein resides in the cytoplasm. It localises to the nucleus. It catalyses the reaction S-ubiquitinyl-[E2 ubiquitin-conjugating enzyme]-L-cysteine + [acceptor protein]-L-lysine = [E2 ubiquitin-conjugating enzyme]-L-cysteine + N(6)-ubiquitinyl-[acceptor protein]-L-lysine.. It functions in the pathway protein modification; protein ubiquitination. Functionally, E3 ubiquitin-protein ligase that promotes the ubiquitination of various substrates. In turn, participates in the regulation of many biological processes including cell cycle, apoptosis, osteoclastogenesis as well as innate or adaptive immunity. Acts as a negative regulator of NF-kappa-B-dependent transcription by promoting the ubiquitination and stabilization of the NF-kappa-B inhibitor TNFAIP3. May promote the ubiquitination of TRAF6 as well. Also acts as a negative regulator of T-cell activation. Inhibits cellular dsRNA responses and interferon production by targeting MAVS component for proteasomal degradation. Ubiquitinates the CDK inhibitor CDKN1A leading to its degradationand probably also CDKN1B and CDKN1C. This activity stimulates cell cycle G1-to-S phase transition and suppresses cellular senescence. May play a role in spermatogenesis. The protein is E3 ubiquitin-protein ligase RNF114 (RNF114) of Homo sapiens (Human).